The chain runs to 226 residues: UPF0758 protein M6_Spy0838 (226 aa).

Residues 103 to 225 (SVLTSVQVAE…YYSFREKSTL (123 aa)) enclose the MPN domain. Positions 174, 176, and 187 each coordinate Zn(2+). The JAMM motif signature appears at 174 to 187 (HNHPSGNIEPSSND).

It belongs to the UPF0758 family.

This is UPF0758 protein M6_Spy0838 from Streptococcus pyogenes serotype M6 (strain ATCC BAA-946 / MGAS10394).